A 615-amino-acid polypeptide reads, in one-letter code: Delta(14)-sterol reductase LBR (615 aa).

The Tudor domain maps to 1–62 (MPSRKFADGE…DIKPLTSFRQ (62 aa)). Residues 1-211 (MPSRKFADGE…IRAKDLEFGG (211 aa)) are Nuclear-facing. Residues 53-109 (DIKPLTSFRQRKGGSTSSSPSRRRGSRSRSRSRSPGRPPKSARRSASASHQADIKEA) form a disordered region. Lys55 bears the N6-acetyllysine mark. Thr58 carries the phosphothreonine modification. Ser59 and Ser67 each carry phosphoserine. Ser71 and Ser86 each carry phosphoserine; by CDK1. The span at 73–86 (SRRRGSRSRSRSRS) shows a compositional bias: basic residues. Phosphoserine occurs at positions 97 and 99. A Phosphothreonine modification is found at Thr118. Ser128 is modified (phosphoserine). A Phosphothreonine modification is found at Thr200. The next 8 helical transmembrane spans lie at 212 to 232 (VPGVFLIMFGLPVFLFLLLLM), 258 to 278 (VFGVYLLWFLIQVVFYLLPIG), 299 to 319 (FYAFILTSAVIGTSLFQGVEF), 326 to 346 (FLQFALAATVFCVVLSVYLYM), 415 to 435 (VPSLAMILVNSFQLLYVVDAL), 447 to 467 (IIHDGFGFMLAFGDLVWVPFI), 481 to 501 (EVSWPMASLIIVLKFCGYVIF), and 561 to 581 (ACGFNHILPYFYIIYFTMLLV). An N6-acetyllysine mark is found at Lys594 and Lys601.

Belongs to the ERG4/ERG24 family. Interacts with CBX5. Interacts with DNA. Interaction with DNA is sequence independent with higher affinity for supercoiled and relaxed circular DNA than linear DNA. Interacts with lamin B. Interacts with CLNK. Interacts with TMEM147; promoting LBR localization to the nucleus inner membrane. Phosphorylated by CDK1 in mitosis when the inner nuclear membrane breaks down into vesicles that dissociate from the lamina and the chromatin. It is phosphorylated by different protein kinases in interphase when the membrane is associated with these structures. Phosphorylation of LBR and HP1 proteins may be responsible for some of the alterations in chromatin organization and nuclear structure which occur at various times during the cell cycle. Phosphorylated by SRPK1. In late anaphase LBR is dephosphorylated, probably by PP1 and/or PP2A, allowing reassociation with chromatin.

It localises to the nucleus inner membrane. It is found in the nucleus. The protein resides in the cytoplasm. Its subcellular location is the endoplasmic reticulum membrane. The catalysed reaction is 5alpha-cholest-8,14-dien-3beta-ol + NADPH + H(+) = 5alpha-cholest-8-en-3beta-ol + NADP(+). It catalyses the reaction 4,4-dimethyl-5alpha-cholesta-8,24-dien-3beta-ol + NADP(+) = 4,4-dimethyl-5alpha-cholesta-8,14,24-trien-3beta-ol + NADPH + H(+). It carries out the reaction 4,4-dimethyl-8,14-cholestadien-3beta-ol + NADPH + H(+) = 4,4-dimethyl-5alpha-cholest-8-en-3beta-ol + NADP(+). Its pathway is steroid biosynthesis; cholesterol biosynthesis. Its function is as follows. Catalyzes the reduction of the C14-unsaturated bond of lanosterol, as part of the metabolic pathway leading to cholesterol biosynthesis. Plays a critical role in myeloid cell cholesterol biosynthesis which is essential to both myeloid cell growth and functional maturation. Mediates the activation of NADPH oxidases, perhaps by maintaining critical levels of cholesterol required for membrane lipid raft formation during neutrophil differentiation. Anchors the lamina and the heterochromatin to the inner nuclear membrane. In Pongo abelii (Sumatran orangutan), this protein is Delta(14)-sterol reductase LBR (LBR).